The following is an 89-amino-acid chain: Small ribosomal subunit protein uS15 (89 aa).

The protein belongs to the universal ribosomal protein uS15 family. Part of the 30S ribosomal subunit. Forms a bridge to the 50S subunit in the 70S ribosome, contacting the 23S rRNA.

Its function is as follows. One of the primary rRNA binding proteins, it binds directly to 16S rRNA where it helps nucleate assembly of the platform of the 30S subunit by binding and bridging several RNA helices of the 16S rRNA. In terms of biological role, forms an intersubunit bridge (bridge B4) with the 23S rRNA of the 50S subunit in the ribosome. The chain is Small ribosomal subunit protein uS15 from Gluconacetobacter diazotrophicus (strain ATCC 49037 / DSM 5601 / CCUG 37298 / CIP 103539 / LMG 7603 / PAl5).